Here is a 2130-residue protein sequence, read N- to C-terminus: Dedicator of cytokinesis protein 7 (2130 aa).

Position 30 is a phosphoserine (serine 30). The disordered stretch occupies residues 137–175 (GFNPNTLDKQKERQKGLPRQVFESDEAPDGSSYQDEQDD). Residues serine 180 and serine 182 each carry the phosphoserine modification. A coiled-coil region spans residues 365 to 395 (FKEADATKNKEKLEKLKSQADQFCQRLGKYR). Residue lysine 381 is modified to N6-methyllysine. Threonine 450 carries the post-translational modification Phosphothreonine. Serine 452 carries the post-translational modification Phosphoserine. The region spanning 561–727 (RNLLYIYPQS…GVFNVEVVAV (167 aa)) is the C2 DOCK-type domain. Serine 862, serine 864, serine 882, serine 888, serine 896, serine 900, and serine 905 each carry phosphoserine. Residues 888-901 (SLNLNRSRSLSNSN) are compositionally biased toward low complexity. Residues 888 to 966 (SLNLNRSRSL…SCNRMSSHTE (79 aa)) form a disordered region. A phosphothreonine mark is found at threonine 907 and threonine 909. Phosphoserine is present on residues serine 910, serine 929, serine 963, serine 1382, serine 1420, serine 1422, serine 1424, and serine 1428. The span at 942 to 966 (SNPSPSAESTQAMDRSCNRMSSHTE) shows a compositional bias: polar residues. One can recognise a DOCKER domain in the interval 1668 to 2104 (KGYQTSPDLR…LQPLINRKIP (437 aa)). Residue lysine 1952 is modified to N6-acetyllysine. A coiled-coil region spans residues 2076–2102 (DQKEYQRELERNYHRLKEALQPLINRK). Position 2119 is a phosphoserine (serine 2119).

It belongs to the DOCK family. Component of the DOCK7-induced septin displacement/DISP complex, at least composed of DOCK7, LRCH3 and MYO6. Interacts with TSC1. Interacts with nucleotide-free RAC1 and RAC3. Interacts with TACC3. Interacts with CRY1. Interacts with NOD2.

The protein localises to the cell projection. The protein resides in the axon. In terms of biological role, functions as a guanine nucleotide exchange factor (GEF), which activates Rac1 and Rac3 Rho small GTPases by exchanging bound GDP for free GTP. Does not have a GEF activity for CDC42. Required for STMN1 'Ser-15' phosphorylation during axon formation and consequently for neuronal polarization. As part of the DISP complex, may regulate the association of septins with actin and thereby regulate the actin cytoskeleton. Has a role in pigmentation. Involved in the regulation of cortical neurogenesis through the control of radial glial cells (RGCs) proliferation versus differentiation; negatively regulates the basal-to-apical interkinetic nuclear migration of RGCs by antagonizing the microtubule growth-promoting function of TACC3. This is Dedicator of cytokinesis protein 7 (Dock7) from Mus musculus (Mouse).